The sequence spans 133 residues: MALKSKVIRPRDFKYRGYTLEELQKMPLEELAKLLPARERRKIKRGFTEQEEKLLRKLRKKGTARTHCRDMVVLPEMVGKVVFVHNGKEFVRVEIKPEMIGHRLGEFALTRRFEKHSGPGVGATRSSKYVPLK.

The protein belongs to the universal ribosomal protein uS19 family.

In terms of biological role, protein S19 forms a complex with S13 that binds strongly to the 16S ribosomal RNA. The sequence is that of Small ribosomal subunit protein uS19 (rps19) from Archaeoglobus fulgidus (strain ATCC 49558 / DSM 4304 / JCM 9628 / NBRC 100126 / VC-16).